A 170-amino-acid polypeptide reads, in one-letter code: Large ribosomal subunit protein uL10 (170 aa).

It belongs to the universal ribosomal protein uL10 family. In terms of assembly, part of the ribosomal stalk of the 50S ribosomal subunit. The N-terminus interacts with L11 and the large rRNA to form the base of the stalk. The C-terminus forms an elongated spine to which L12 dimers bind in a sequential fashion forming a multimeric L10(L12)X complex.

Its function is as follows. Forms part of the ribosomal stalk, playing a central role in the interaction of the ribosome with GTP-bound translation factors. The sequence is that of Large ribosomal subunit protein uL10 from Novosphingobium aromaticivorans (strain ATCC 700278 / DSM 12444 / CCUG 56034 / CIP 105152 / NBRC 16084 / F199).